The following is a 525-amino-acid chain: GMP synthase [glutamine-hydrolyzing] (525 aa).

Residues Pro8–Glu206 enclose the Glutamine amidotransferase type-1 domain. Residue Cys85 is the Nucleophile of the active site. Active-site residues include His180 and Glu182. The 194-residue stretch at Trp207–Arg400 folds into the GMPS ATP-PPase domain. Residue Ser234–Ser240 participates in ATP binding.

As to quaternary structure, homodimer.

It carries out the reaction XMP + L-glutamine + ATP + H2O = GMP + L-glutamate + AMP + diphosphate + 2 H(+). It participates in purine metabolism; GMP biosynthesis; GMP from XMP (L-Gln route): step 1/1. Catalyzes the synthesis of GMP from XMP. This Legionella pneumophila (strain Corby) protein is GMP synthase [glutamine-hydrolyzing].